The sequence spans 134 residues: Auxin-responsive protein SAUR40 (134 aa).

The protein belongs to the ARG7 family. As to quaternary structure, interacts with and inhibits PP2C-D subfamily of type 2C phosphatases such as PP2C67/PP2C-D1.

It localises to the cytoplasm. Functionally, provide a mechanistic link between auxin and plasma membrane H(+)-ATPases (PM H(+)-ATPases, e.g. AHA1 and AHA2), and triggers PM H(+)-ATPases activity by promoting phosphorylation of their C-terminal autoinhibitory domain as a result of PP2C-D subfamily of type 2C phosphatases inhibition, thus leading to the acidification of the apoplast and the facilitation of solutes and water uptake to drive cell expansion. Plays a role in the regulation of cell expansion, root meristem patterning and auxin transport. The protein is Auxin-responsive protein SAUR40 of Arabidopsis thaliana (Mouse-ear cress).